We begin with the raw amino-acid sequence, 538 residues long: Mitochondria-eating protein (538 aa).

An interaction with YWHAG/14-3-3 protein gamma region spans residues 1 to 273 (MAENLKRLVS…PRSRSCSRSR (273 aa)). S85 is subject to Phosphoserine. The tract at residues 92–137 (GKPVDSKVPSLQNTFDRERRKDPSPRDRDMQQLDSNLNSTRSQLNQ) is disordered. Residues 106 to 122 (FDRERRKDPSPRDRDMQ) are compositionally biased toward basic and acidic residues. Coiled-coil stretches lie at residues 118–186 (DRDM…ARHR) and 220–256 (QRDTEVTSDYKKQLRNLKEEIAVLSAEKSALQGRSSR). A compositionally biased stretch (polar residues) spans 123 to 137 (QLDSNLNSTRSQLNQ). A phosphoserine mark is found at S156 and S159. Disordered stretches follow at residues 174 to 227 (LKTL…EVTS) and 247 to 292 (KSAL…NRSK). 2 stretches are compositionally biased toward basic and acidic residues: residues 181-209 (EDARHRHTDQRSSENRRSEPRSSEERRCE) and 216-227 (RNADQRDTEVTS). Positions 253–278 (RSSRSRSPSPAPRSRSCSRSRSASPS) are enriched in low complexity. S285, S287, and S509 each carry phosphoserine.

It belongs to the MIEAP family. Interacts (via coiled-coil domains) with BNIP3L (via BH3 domain). Interacts (via coiled-coil domains) with BNIP3 (via BH3 domain). Interacts with YWHAG/14-3-3 protein gamma; a protein that also plays a role in MALM.

The protein resides in the cytoplasm. It localises to the cytosol. Its subcellular location is the mitochondrion outer membrane. The protein localises to the mitochondrion matrix. In terms of biological role, key regulator of mitochondrial quality that mediates the repairing or degradation of unhealthy mitochondria in response to mitochondrial damage. Mediator of mitochondrial protein catabolic process (also named MALM) by mediating the degradation of damaged proteins inside mitochondria by promoting the accumulation in the mitochondrial matrix of hydrolases that are characteristic of the lysosomal lumen. Also involved in mitochondrion degradation of damaged mitochondria by promoting the formation of vacuole-like structures (named MIV), which engulf and degrade unhealthy mitochondria by accumulating lysosomes. The physical interaction of SPATA18/MIEAP, BNIP3 and BNIP3L/NIX at the mitochondrial outer membrane regulates the opening of a pore in the mitochondrial double membrane in order to mediate the translocation of lysosomal proteins from the cytoplasm to the mitochondrial matrix. Binds cardiolipin. May form molecular condensates (non-membrane-bounded organelles) within mitochondria that compartmentalize and promote cardiolipin metabolism. The sequence is that of Mitochondria-eating protein (SPATA18) from Macaca fascicularis (Crab-eating macaque).